We begin with the raw amino-acid sequence, 224 residues long: UPF0758 protein VP0184 (224 aa).

Residues 102 to 224 (ALTSPEQTKL…SVSFAERGWI (123 aa)) enclose the MPN domain. Residues histidine 173, histidine 175, and aspartate 186 each coordinate Zn(2+). A JAMM motif motif is present at residues 173-186 (HNHPSGVAEPSQAD).

The protein belongs to the UPF0758 family.

This chain is UPF0758 protein VP0184, found in Vibrio parahaemolyticus serotype O3:K6 (strain RIMD 2210633).